Reading from the N-terminus, the 413-residue chain is MKKVVSSLLIILGAAMLIFAIALPTYVVPKGKVLPKDIVSTTGTDPIKGNLLDASALAEGKPVSGKENLPECRGKDKQVSCFIWKDLELQSQRFTRAQEPTDDKVVTLEAGQTLFRTDRQEPKNLVNATVDRVTLDRKTQMPVADPVSTLDVNAPALNPNGEAAIGPFTRPGIQYQFPMGTDRRSYDYFDTQALKAQPIDYVGEEEQDGEKVYKFEQTVSPVELYPRLKEQLEADGDLSKADQSTLASLRLKFPAKVWGIEGADTKSAADSKDDKKKDGDKKDEKSPEVELSRYYTVKRTLWVQPDTGVIVNGKEDIWQFYAKDQDEADKMAQPENREKEMNNPKRTALYIPGAWNDESRAAQMDKAKEGLKTLKTMGTTVPWILGPLGLLLLLVGLVMALKRRRAERHANAL.

Residues 1-22 (MKKVVSSLLIILGAAMLIFAIA) form the signal peptide. The segment at 265 to 288 (TKSAADSKDDKKKDGDKKDEKSPE) is disordered.

This sequence belongs to the PorA family.

It is found in the secreted. It localises to the cell wall. In terms of biological role, forms water-filled channels that favor the permeation of cations. The chain is Porin PorA from Corynebacterium resistens (strain DSM 45100 / JCM 12819 / GTC 2026 / SICGH 158).